The following is a 336-amino-acid chain: Glucokinase (336 aa).

ATP is bound at residue 12–17; it reads ADIGGT.

The protein belongs to the bacterial glucokinase family.

Its subcellular location is the cytoplasm. It catalyses the reaction D-glucose + ATP = D-glucose 6-phosphate + ADP + H(+). The chain is Glucokinase from Helicobacter acinonychis (strain Sheeba).